Consider the following 108-residue polypeptide: Nucleoid-associated protein Avin_19840 (108 aa).

It belongs to the YbaB/EbfC family. As to quaternary structure, homodimer.

It is found in the cytoplasm. The protein resides in the nucleoid. Binds to DNA and alters its conformation. May be involved in regulation of gene expression, nucleoid organization and DNA protection. The protein is Nucleoid-associated protein Avin_19840 of Azotobacter vinelandii (strain DJ / ATCC BAA-1303).